The sequence spans 278 residues: Large ribosomal subunit protein uL2 (278 aa).

Positions 223–278 (RGSAMNPNDHPHGGGEGKAPVGRKAPMTPWGKKALGVKTRNKKKASTKLIVRRRTK) are disordered. Over residues 261–278 (TRNKKKASTKLIVRRRTK) the composition is skewed to basic residues.

It belongs to the universal ribosomal protein uL2 family. In terms of assembly, part of the 50S ribosomal subunit. Forms a bridge to the 30S subunit in the 70S ribosome.

Its function is as follows. One of the primary rRNA binding proteins. Required for association of the 30S and 50S subunits to form the 70S ribosome, for tRNA binding and peptide bond formation. It has been suggested to have peptidyltransferase activity; this is somewhat controversial. Makes several contacts with the 16S rRNA in the 70S ribosome. This is Large ribosomal subunit protein uL2 from Spiroplasma kunkelii.